The following is a 72-amino-acid chain: SRY-related protein ADW5 (72 aa).

The segment at residues 1–69 (VKRPMNAFMV…KHMADYPDYK (69 aa)) is a DNA-binding region (HMG box).

The protein resides in the nucleus. The protein is SRY-related protein ADW5 of Alligator mississippiensis (American alligator).